A 125-amino-acid chain; its full sequence is Small ribosomal subunit protein uS13 (125 aa).

A disordered region spans residues 97 to 125 (PVRGQKTRSNARTRKGPRPSRIKTKKKSS). The span at 101–125 (QKTRSNARTRKGPRPSRIKTKKKSS) shows a compositional bias: basic residues.

The protein belongs to the universal ribosomal protein uS13 family. In terms of assembly, part of the 30S ribosomal subunit. Forms a loose heterodimer with protein S19. Forms two bridges to the 50S subunit in the 70S ribosome.

Located at the top of the head of the 30S subunit, it contacts several helices of the 16S rRNA. In the 70S ribosome it contacts the 23S rRNA (bridge B1a) and protein L5 of the 50S subunit (bridge B1b), connecting the 2 subunits; these bridges are implicated in subunit movement. Contacts the tRNAs in the A and P-sites. The protein is Small ribosomal subunit protein uS13 of Thermotoga neapolitana (strain ATCC 49049 / DSM 4359 / NBRC 107923 / NS-E).